The primary structure comprises 358 residues: DNA polymerase IV (358 aa).

The 182-residue stretch at 4 to 185 (IIHIDMDCYF…LPLIKIPGVG (182 aa)) folds into the UmuC domain. Mg(2+)-binding residues include Asp-8 and Asp-103. Residue Glu-104 is part of the active site.

This sequence belongs to the DNA polymerase type-Y family. In terms of assembly, monomer. Mg(2+) serves as cofactor.

It is found in the cytoplasm. It carries out the reaction DNA(n) + a 2'-deoxyribonucleoside 5'-triphosphate = DNA(n+1) + diphosphate. In terms of biological role, poorly processive, error-prone DNA polymerase involved in untargeted mutagenesis. Copies undamaged DNA at stalled replication forks, which arise in vivo from mismatched or misaligned primer ends. These misaligned primers can be extended by PolIV. Exhibits no 3'-5' exonuclease (proofreading) activity. May be involved in translesional synthesis, in conjunction with the beta clamp from PolIII. This chain is DNA polymerase IV, found in Shewanella denitrificans (strain OS217 / ATCC BAA-1090 / DSM 15013).